The chain runs to 141 residues: HTH-type transcriptional regulator MntR (141 aa).

Positions 1 to 63 constitute an HTH dtxR-type domain; the sequence is MPTPSMEDYI…YEKYRGLVLT (63 aa). Residues Asp-8, Glu-11, His-77, Glu-99, Glu-102, and His-103 each contribute to the Mn(2+) site.

The protein belongs to the DtxR/MntR family. As to quaternary structure, homodimer.

The protein localises to the cytoplasm. With respect to regulation, DNA binding is strongly activated by Mn(2+). Functionally, central regulator of manganese homeostasis. This Geobacillus thermodenitrificans (strain NG80-2) protein is HTH-type transcriptional regulator MntR.